Consider the following 83-residue polypeptide: Cell division topological specificity factor (83 aa).

The protein belongs to the MinE family.

In terms of biological role, prevents the cell division inhibition by proteins MinC and MinD at internal division sites while permitting inhibition at polar sites. This ensures cell division at the proper site by restricting the formation of a division septum at the midpoint of the long axis of the cell. The sequence is that of Cell division topological specificity factor from Pseudoalteromonas atlantica (strain T6c / ATCC BAA-1087).